A 668-amino-acid polypeptide reads, in one-letter code: DNA ligase (668 aa).

Residues 37–41 (DAVYD), 86–87 (SM), and Glu-116 each bind NAD(+). Lys-118 serves as the catalytic N6-AMP-lysine intermediate. Residues Arg-139, Glu-173, Lys-288, and Lys-312 each contribute to the NAD(+) site. The Zn(2+) site is built by Cys-406, Cys-409, Cys-424, and Cys-429. Residues 590-668 (APDNFFKEKT…EQEAIAKIEK (79 aa)) enclose the BRCT domain.

The protein belongs to the NAD-dependent DNA ligase family. LigA subfamily. Mg(2+) serves as cofactor. Requires Mn(2+) as cofactor.

It carries out the reaction NAD(+) + (deoxyribonucleotide)n-3'-hydroxyl + 5'-phospho-(deoxyribonucleotide)m = (deoxyribonucleotide)n+m + AMP + beta-nicotinamide D-nucleotide.. Its function is as follows. DNA ligase that catalyzes the formation of phosphodiester linkages between 5'-phosphoryl and 3'-hydroxyl groups in double-stranded DNA using NAD as a coenzyme and as the energy source for the reaction. It is essential for DNA replication and repair of damaged DNA. The sequence is that of DNA ligase from Lactobacillus gasseri (strain ATCC 33323 / DSM 20243 / BCRC 14619 / CIP 102991 / JCM 1131 / KCTC 3163 / NCIMB 11718 / NCTC 13722 / AM63).